The sequence spans 875 residues: Phosphoenolpyruvate carboxylase (875 aa).

Active-site residues include histidine 137 and lysine 542.

It belongs to the PEPCase type 1 family. Mg(2+) is required as a cofactor.

The catalysed reaction is oxaloacetate + phosphate = phosphoenolpyruvate + hydrogencarbonate. In terms of biological role, forms oxaloacetate, a four-carbon dicarboxylic acid source for the tricarboxylic acid cycle. The protein is Phosphoenolpyruvate carboxylase of Pseudomonas putida (strain GB-1).